Here is a 553-residue protein sequence, read N- to C-terminus: CTP synthase (553 aa).

The segment at 1 to 270 is amidoligase domain; the sequence is MTKYVFVTGG…DRLICEELRL (270 aa). S13 serves as a coordination point for CTP. S13 contributes to the UTP binding site. ATP-binding positions include 14–19 and D71; that span reads SLGKGI. 2 residues coordinate Mg(2+): D71 and E144. Residues 151–153, 191–196, and K227 each bind CTP; these read DIE and KTKPTQ. UTP contacts are provided by residues 191-196 and K227; that span reads KTKPTQ. The Glutamine amidotransferase type-1 domain occupies 295-547; that stretch reads TIGMVGKYVD…VQAALACQQT (253 aa). An L-glutamine-binding site is contributed by G356. C383 functions as the Nucleophile; for glutamine hydrolysis in the catalytic mechanism. L-glutamine-binding positions include 384 to 387, E407, and R473; that span reads LGMQ. Residues H520 and E522 contribute to the active site.

The protein belongs to the CTP synthase family. As to quaternary structure, homotetramer.

The catalysed reaction is UTP + L-glutamine + ATP + H2O = CTP + L-glutamate + ADP + phosphate + 2 H(+). The enzyme catalyses L-glutamine + H2O = L-glutamate + NH4(+). It carries out the reaction UTP + NH4(+) + ATP = CTP + ADP + phosphate + 2 H(+). It participates in pyrimidine metabolism; CTP biosynthesis via de novo pathway; CTP from UDP: step 2/2. Its activity is regulated as follows. Allosterically activated by GTP, when glutamine is the substrate; GTP has no effect on the reaction when ammonia is the substrate. The allosteric effector GTP functions by stabilizing the protein conformation that binds the tetrahedral intermediate(s) formed during glutamine hydrolysis. Inhibited by the product CTP, via allosteric rather than competitive inhibition. Catalyzes the ATP-dependent amination of UTP to CTP with either L-glutamine or ammonia as the source of nitrogen. Regulates intracellular CTP levels through interactions with the four ribonucleotide triphosphates. In Burkholderia mallei (strain NCTC 10229), this protein is CTP synthase.